The following is a 451-amino-acid chain: Tryptophan--tRNA ligase (451 aa).

Residues 10-12 and 18-19 contribute to the ATP site; these read TTT and GN. The 'HIGH' region motif lies at 11–19; that stretch reads TTGTPHLGN. Residue Asp-143 participates in L-tryptophan binding. ATP-binding positions include 155 to 157, Leu-195, and 202 to 206; these read GRD and KMSKS. The 'KMSKS' region motif lies at 202-206; the sequence is KMSKS.

This sequence belongs to the class-I aminoacyl-tRNA synthetase family. Homodimer.

It is found in the cytoplasm. The catalysed reaction is tRNA(Trp) + L-tryptophan + ATP = L-tryptophyl-tRNA(Trp) + AMP + diphosphate + H(+). Catalyzes the attachment of tryptophan to tRNA(Trp). This is Tryptophan--tRNA ligase from Bordetella bronchiseptica (strain ATCC BAA-588 / NCTC 13252 / RB50) (Alcaligenes bronchisepticus).